The sequence spans 313 residues: Cytochrome f (313 aa).

The N-terminal stretch at 1 to 31 (MQNMFSFLSNKKIIALFLIIGTIFMPLSSEA) is a signal peptide. Heme-binding residues include Tyr32, Cys52, Cys55, and His56. A helical membrane pass occupies residues 279 to 298 (IKWLIAFLILSTLGQVFLVL).

Belongs to the cytochrome f family. As to quaternary structure, the 4 large subunits of the cytochrome b6-f complex are cytochrome b6, subunit IV (17 kDa polypeptide, petD), cytochrome f and the Rieske protein, while the 4 small subunits are PetG, PetL, PetM and PetN. The complex functions as a dimer. Requires heme as cofactor.

The protein resides in the plastid. It is found in the chloroplast thylakoid membrane. In terms of biological role, component of the cytochrome b6-f complex, which mediates electron transfer between photosystem II (PSII) and photosystem I (PSI), cyclic electron flow around PSI, and state transitions. This Mesostigma viride (Green alga) protein is Cytochrome f (petA).